Here is a 1068-residue protein sequence, read N- to C-terminus: Huntingtin-interacting protein 1-related protein (1068 aa).

Met-1 bears the N-acetylmethionine mark. The 129-residue stretch at 23-151 (EREQFDKTQA…SFHLKHPQFP (129 aa)) folds into the ENTH domain. Residues 346-644 (GSMKDDRDLQ…LQDAVSKLDD (299 aa)) are a coiled coil. Residues 582–610 (EALSQEQQRSSQEKGELRGQLAEKESQEQ) form a disordered region. The segment covering 592–608 (SQEKGELRGQLAEKESQ) has biased composition (basic and acidic residues). Residues 771–1012 (SLDVRQEELG…ELRKQHYVLA (242 aa)) enclose the I/LWEQ domain. An important for actin binding region spans residues 867–924 (RWTEGLISASKAVGWGATQLVESADKVVLHMGKYEELIVCSHEIAASTAQLVAASKVK). A disordered region spans residues 1011–1068 (LAGGMGTPSEEEPSRPSPAPRSGATKKPPLAQKPSIAPRTDNQLDKKDGVYPAQLVNY).

This sequence belongs to the SLA2 family. Homodimer. Interacts with actin; homodimerization promotes actin binding. Interacts with CLTB. Interacts with HIP1. Interacts (via ENTH and I/LWEQ domains) with BCL2L10. In terms of tissue distribution, widely expressed. Expressed at lower levels in skeletal muscle and heart. The level of expression does not change appreciably during development.

It is found in the cytoplasm. The protein resides in the perinuclear region. Its subcellular location is the endomembrane system. It localises to the cytoplasmic vesicle. The protein localises to the clathrin-coated vesicle membrane. In terms of biological role, component of clathrin-coated pits and vesicles, that may link the endocytic machinery to the actin cytoskeleton. Binds 3-phosphoinositides (via ENTH domain). May act through the ENTH domain to promote cell survival by stabilizing receptor tyrosine kinases following ligand-induced endocytosis. This Mus musculus (Mouse) protein is Huntingtin-interacting protein 1-related protein (Hip1r).